We begin with the raw amino-acid sequence, 54 residues long: Ribulose bisphosphate carboxylase large chain (54 aa).

The propeptide occupies 1 to 2 (MS). An N-acetylproline modification is found at proline 3. Position 14 is an N6,N6,N6-trimethyllysine (lysine 14).

This sequence belongs to the RuBisCO large chain family. Type I subfamily. Heterohexadecamer of 8 large chains and 8 small chains.

Its subcellular location is the plastid. It localises to the chloroplast. The enzyme catalyses 2 (2R)-3-phosphoglycerate + 2 H(+) = D-ribulose 1,5-bisphosphate + CO2 + H2O. It catalyses the reaction D-ribulose 1,5-bisphosphate + O2 = 2-phosphoglycolate + (2R)-3-phosphoglycerate + 2 H(+). Its function is as follows. RuBisCO catalyzes two reactions: the carboxylation of D-ribulose 1,5-bisphosphate, the primary event in carbon dioxide fixation, as well as the oxidative fragmentation of the pentose substrate in the photorespiration process. Both reactions occur simultaneously and in competition at the same active site. This chain is Ribulose bisphosphate carboxylase large chain (rbcL), found in Magnolia liliiflora (Mulan magnolia).